The sequence spans 346 residues: Mannonate dehydratase (346 aa).

Belongs to the mannonate dehydratase family. Fe(2+) serves as cofactor. Mn(2+) is required as a cofactor.

The enzyme catalyses D-mannonate = 2-dehydro-3-deoxy-D-gluconate + H2O. It functions in the pathway carbohydrate metabolism; pentose and glucuronate interconversion. Its function is as follows. Catalyzes the dehydration of D-mannonate. In Cupriavidus taiwanensis (strain DSM 17343 / BCRC 17206 / CCUG 44338 / CIP 107171 / LMG 19424 / R1) (Ralstonia taiwanensis (strain LMG 19424)), this protein is Mannonate dehydratase.